The chain runs to 61 residues: MDPKLLDILVCPLCKSPLLYRKPENELICKADRLAFPIRDGIPIMLEDEARRLPVEEEISR.

The protein belongs to the UPF0434 family.

This Nitrosospira multiformis (strain ATCC 25196 / NCIMB 11849 / C 71) protein is UPF0434 protein Nmul_A1027.